The following is a 504-amino-acid chain: D-alanine--D-alanyl carrier protein ligase (504 aa).

152-153 (TS) provides a ligand contact to ATP. Residue aspartate 197 coordinates D-alanine. 292-297 (NTYGPT) serves as a coordination point for ATP. Residue valine 301 participates in D-alanine binding. ATP-binding positions include aspartate 383, 394 to 397 (YNGR), and lysine 492. Lysine 492 provides a ligand contact to D-alanine.

This sequence belongs to the ATP-dependent AMP-binding enzyme family. DltA subfamily.

The protein resides in the cytoplasm. The catalysed reaction is holo-[D-alanyl-carrier protein] + D-alanine + ATP = D-alanyl-[D-alanyl-carrier protein] + AMP + diphosphate. It functions in the pathway cell wall biogenesis; lipoteichoic acid biosynthesis. Catalyzes the first step in the D-alanylation of lipoteichoic acid (LTA), the activation of D-alanine and its transfer onto the D-alanyl carrier protein (Dcp) DltC. In an ATP-dependent two-step reaction, forms a high energy D-alanyl-AMP intermediate, followed by transfer of the D-alanyl residue as a thiol ester to the phosphopantheinyl prosthetic group of the Dcp. D-alanylation of LTA plays an important role in modulating the properties of the cell wall in Gram-positive bacteria, influencing the net charge of the cell wall. In Bacillus mycoides (strain KBAB4) (Bacillus weihenstephanensis), this protein is D-alanine--D-alanyl carrier protein ligase.